The chain runs to 368 residues: Phosphate acyltransferase (368 aa).

The interval 334–368 is disordered; the sequence is AAPLGESGRDADGAGQASPSAGQPAEPSAALSSKT.

The protein belongs to the PlsX family. In terms of assembly, homodimer. Probably interacts with PlsY.

The protein localises to the cytoplasm. The catalysed reaction is a fatty acyl-[ACP] + phosphate = an acyl phosphate + holo-[ACP]. It functions in the pathway lipid metabolism; phospholipid metabolism. Functionally, catalyzes the reversible formation of acyl-phosphate (acyl-PO(4)) from acyl-[acyl-carrier-protein] (acyl-ACP). This enzyme utilizes acyl-ACP as fatty acyl donor, but not acyl-CoA. The chain is Phosphate acyltransferase from Burkholderia thailandensis (strain ATCC 700388 / DSM 13276 / CCUG 48851 / CIP 106301 / E264).